Consider the following 35-residue polypeptide: Photosystem II reaction center protein Psb30 (35 aa).

Residues 7-27 traverse the membrane as a helical segment; it reads VFVQLLLLALIVLAGPAVILL.

It belongs to the Psb30/Ycf12 family. As to quaternary structure, PSII is composed of 1 copy each of membrane proteins PsbA, PsbB, PsbC, PsbD, PsbE, PsbF, PsbH, PsbI, PsbJ, PsbK, PsbL, PsbM, PsbT, PsbX, PsbY, PsbZ, Psb30/Ycf12, peripheral proteins PsbO, CyanoQ (PsbQ), PsbU, PsbV and a large number of cofactors. It forms dimeric complexes.

Its subcellular location is the cellular thylakoid membrane. Its function is as follows. A core subunit of photosystem II (PSII), probably helps stabilize the reaction center. The protein is Photosystem II reaction center protein Psb30 of Synechococcus sp. (strain JA-3-3Ab) (Cyanobacteria bacterium Yellowstone A-Prime).